A 312-amino-acid chain; its full sequence is R2-like ligand binding oxidase (312 aa).

3 residues coordinate Mn(2+): Glu68, Glu101, and His104. The segment at residues Val71 to Tyr162 is a cross-link (3-(O4'-tyrosyl)-valine (Val-Tyr)). Glu101 provides a ligand contact to Fe cation. Glu167, Glu202, and His205 together coordinate Fe cation.

Belongs to the ribonucleoside diphosphate reductase small chain family. R2-like ligand binding oxidase subfamily. In terms of assembly, homodimer. Fe cation is required as a cofactor. The cofactor is Mn(2+).

Its function is as follows. Probable oxidase that might be involved in lipid metabolism. This is R2-like ligand binding oxidase from Mycolicibacterium gilvum (strain PYR-GCK) (Mycobacterium gilvum (strain PYR-GCK)).